The following is a 1026-amino-acid chain: Beta-galactosidase (1026 aa).

The active-site Proton donor is the Glu-458. Residue Glu-546 is the Nucleophile of the active site.

The protein belongs to the glycosyl hydrolase 2 family.

The catalysed reaction is Hydrolysis of terminal non-reducing beta-D-galactose residues in beta-D-galactosides.. This chain is Beta-galactosidase (lacZ), found in Streptococcus thermophilus.